The chain runs to 824 residues: MSSLLNFYRKVLNVPLSLLVKSRAIPTDPVKELNLNLEQPIIYVLPYTSQTDLLILQKNCLALNLPDPLQNNELNGQSLPRYVFLDEGRRFFKSKGAKSETESIFYRYLDLHRNNESLDVQLIPASVLWGRSPGKESEPHLRLMSSFQRIISMIWFGRDNFVRFSQALSLKYMVAEHGADEGIAQKLARVAKIHFAKQRYSAMGPRLPDRQAMFNKIIQSPAIKAAIEEEAKTKKISIEKARQEAEKIVNEIAADVSHESLRIADRVLSWLWNKLYQGINVQNGDRVRKLALEGHEIVYVPCHRSHMDYLLLSYLLYHQGLVPPHIAAGINLNFFPAGPIFRSWGAFFIRRTFKGNRLYSTIFREYLAELFYRGYSVEYFIEGGRSRTGRLLEPKTGMMSMTLQALQRGLTRPISIVPVYIGYEHVLEVDTYAKELRGAEKEKENAGLVLRVIKKLKNLGQCYVNFAEPIQVNNYLNQHFPEWKESQAEDSRPKWLNEAVDSVAHQVMININKAAAINAKNLIGSVLLASRQRALAREQLIEQVDSYLQLFKNVSYSDDVIVPNDSAEEMLNHVLTLPRSGVISEKDSFGEMIRLDRESAVLMTYYRNNIQHLFVLPSLVASIILHHESVSKDLIIKTVNRIYPFLKAELFLHFEENDVRNQVEAILTEFSAQRIVKYESDVLQINRARVRALQLHAAGVREILQRYYISLSILLEHPEISRAALEKESRSIAQRLSILHGINAPEFFDKALFSTFSASLKAQGYFDSEGNCILEKAKEAEEILRSLISVEVQLTIQGAMEKVEEVENTETVVKTAEAVTEKNE.

The short motif at 302–307 (CHRSHM) is the HXXXXD motif element.

This sequence belongs to the GPAT/DAPAT family.

It is found in the cell inner membrane. It catalyses the reaction sn-glycerol 3-phosphate + an acyl-CoA = a 1-acyl-sn-glycero-3-phosphate + CoA. Its pathway is phospholipid metabolism; CDP-diacylglycerol biosynthesis; CDP-diacylglycerol from sn-glycerol 3-phosphate: step 1/3. The polypeptide is Glycerol-3-phosphate acyltransferase (Actinobacillus pleuropneumoniae serotype 7 (strain AP76)).